Consider the following 71-residue polypeptide: Small ribosomal subunit protein bS21 (71 aa).

Positions 47–71 (RENATRAKRHAKRVARENARNTRLY) are disordered. The span at 60 to 71 (VARENARNTRLY) shows a compositional bias: basic and acidic residues.

The protein belongs to the bacterial ribosomal protein bS21 family.

This is Small ribosomal subunit protein bS21 from Histophilus somni (strain 129Pt) (Haemophilus somnus).